Here is a 454-residue protein sequence, read N- to C-terminus: Allantoinase (454 aa).

6 residues coordinate Zn(2+): His58, His60, Lys149, His189, His245, and Asp318. Position 149 is an N6-carboxylysine (Lys149).

Belongs to the metallo-dependent hydrolases superfamily. Allantoinase family. In terms of assembly, homotetramer. Zn(2+) serves as cofactor. Carboxylation allows a single lysine to coordinate two zinc ions.

The enzyme catalyses (S)-allantoin + H2O = allantoate + H(+). It functions in the pathway nitrogen metabolism; (S)-allantoin degradation; allantoate from (S)-allantoin: step 1/1. Catalyzes the conversion of allantoin (5-ureidohydantoin) to allantoic acid by hydrolytic cleavage of the five-member hydantoin ring. This chain is Allantoinase, found in Enterococcus faecalis (strain ATCC 700802 / V583).